The following is a 427-amino-acid chain: Chitin disaccharide deacetylase (427 aa).

A signal peptide spans 1–22 (MKLNKLAIATLVSAALSQYAFA). One can recognise a NodB homology domain in the interval 28–326 (GTIYLTFDDG…LAKQAGYVFD (299 aa)). 2 Chitin-binding type-3 domains span residues 333-375 (PNWQ…SSLW) and 382-419 (TNWT…TPNS).

It belongs to the polysaccharide deacetylase family. Carbohydrate-binding module 12 subfamily.

It carries out the reaction N,N'-diacetylchitobiose + H2O = N-acetyl-beta-D-glucosaminyl-(1-&gt;4)-D-glucosamine + acetate. It functions in the pathway glycan degradation; chitin degradation. Specifically catalyzes the degradation of N,N'-diacetylchitobiose. Key enzyme in the chitin catabolic cascade. The chain is Chitin disaccharide deacetylase (deaA) from Vibrio alginolyticus.